The primary structure comprises 546 residues: Low-affinity methionine permease (546 aa).

Residues 1-70 (MEPLLFNSGK…QGRHLGVFST (70 aa)) are Extracellular-facing. Residues 71–91 (VVLFVSRIMGSGIFAVPSVIL) traverse the membrane as a helical segment. Residues 92 to 98 (LNTGGNK) lie on the Cytoplasmic side of the membrane. A helical membrane pass occupies residues 99–119 (LIYFAIWVFSAAIAFAGLYLF). Residues 120-148 (LEFGSWIPKSGGRKNFLERSFERPRLLIS) are Extracellular-facing. Residues 149-169 (VVFSCYSVLTGYALTGSIVFG) form a helical membrane-spanning segment. Over 170 to 188 (KYVLSAFGVTDDSWSKYVS) the chain is Cytoplasmic. A helical transmembrane segment spans residues 189–209 (ISFIIFAVLIHGVSVRHGVFI). Residues 210 to 213 (QNAL) lie on the Extracellular side of the membrane. Residues 214–234 (GGLKLIMIVLMCFAGLYTLFF) traverse the membrane as a helical segment. The Cytoplasmic portion of the chain corresponds to 235-254 (YKSTGQVAWDLPVTQVEKDS). The helical transmembrane segment at 255–275 (LLSVSSIATAFISSFFCFSGW) threads the bilayer. Residues 276-297 (DTVHTVTSEIKNPVKTLKVSGP) lie on the Extracellular side of the membrane. Residues 298–318 (LSLIICFVCYTMMNVAYLKVL) form a helical membrane-spanning segment. Residue Thr319 is a topological domain, cytoplasmic. The chain crosses the membrane as a helical span at residues 320–340 (YEEIVSAGPLVGSVLFTKLFG). The Extracellular segment spans residues 341-346 (PRVGGK). Residues 347 to 367 (FIAFSIAISAASNILVVIYSI) form a helical membrane-spanning segment. Topologically, residues 368 to 393 (SRVNQEIFKEGYLPFSIHMSKNWPFD) are cytoplasmic. Residues 394–414 (APLPSISLCGFITIAWILILP) traverse the membrane as a helical segment. At 415–423 (KEGESFNYL) the chain is on the extracellular side. Residues 424–444 (VSMDGYGNQFFLLLVAIGLFI) form a helical membrane-spanning segment. Residues 445–459 (WRFKHKNEVPEIRAS) lie on the Cytoplasmic side of the membrane. Residues 460 to 480 (TFGVLAIITLSLYMLMAPFFA) form a helical membrane-spanning segment. At 481-494 (DPSLNRVGFLPPYQ) the chain is on the extracellular side. Residues 495–515 (IMSLLVIVACFFFWLVKFVLL) traverse the membrane as a helical segment. Residues 516–546 (PKFFHYKLLPKITYLHDGLIVTEWVKKPCLC) lie on the Cytoplasmic side of the membrane.

It to yeast high affinity methionine permease (MUP1).

The protein resides in the membrane. In terms of biological role, very low affinity permease for methionine. The polypeptide is Low-affinity methionine permease (MUP3) (Saccharomyces cerevisiae (strain ATCC 204508 / S288c) (Baker's yeast)).